We begin with the raw amino-acid sequence, 137 residues long: Basic phospholipase A2 homolog Cax-K49 (137 aa).

An N-terminal signal peptide occupies residues 1-16; that stretch reads MRTFWIVAMLLVGVEG. Intrachain disulfides connect cysteine 42–cysteine 131, cysteine 44–cysteine 60, cysteine 59–cysteine 111, cysteine 65–cysteine 137, cysteine 66–cysteine 104, cysteine 73–cysteine 97, and cysteine 91–cysteine 102. Residues 121–133 form an important for membrane-damaging activities in eukaryotes and bacteria; heparin-binding region; that stretch reads KKYKIYPKFLCKK.

As to quaternary structure, homodimer; non-covalently linked. In terms of tissue distribution, expressed by the venom gland.

The protein localises to the secreted. Its function is as follows. Snake venom phospholipase A2 homolog that lacks enzymatic activity. Displays edema-inducing activities and may be myotoxic. A model of myotoxic mechanism has been proposed: an apo Lys49-PLA2 is activated by the entrance of a hydrophobic molecule (e.g. fatty acid) at the hydrophobic channel of the protein leading to a reorientation of a monomer. This reorientation causes a transition between 'inactive' to 'active' states, causing alignment of C-terminal and membrane-docking sites (MDoS) side-by-side and putting the membrane-disruption sites (MDiS) in the same plane, exposed to solvent and in a symmetric position for both monomers. The MDoS region stabilizes the toxin on membrane by the interaction of charged residues with phospholipid head groups. Subsequently, the MDiS region destabilizes the membrane with penetration of hydrophobic residues. This insertion causes a disorganization of the membrane, allowing an uncontrolled influx of ions (i.e. calcium and sodium), and eventually triggering irreversible intracellular alterations and cell death. The chain is Basic phospholipase A2 homolog Cax-K49 from Crotalus atrox (Western diamondback rattlesnake).